The sequence spans 546 residues: Chaperonin GroEL (546 aa).

ATP contacts are provided by residues 29 to 32 (TMGP), Lys-50, 86 to 90 (DGTTT), Gly-414, and Asp-492.

The protein belongs to the chaperonin (HSP60) family. Forms a cylinder of 14 subunits composed of two heptameric rings stacked back-to-back. Interacts with the co-chaperonin GroES.

The protein localises to the cytoplasm. It carries out the reaction ATP + H2O + a folded polypeptide = ADP + phosphate + an unfolded polypeptide.. In terms of biological role, together with its co-chaperonin GroES, plays an essential role in assisting protein folding. The GroEL-GroES system forms a nano-cage that allows encapsulation of the non-native substrate proteins and provides a physical environment optimized to promote and accelerate protein folding. This chain is Chaperonin GroEL, found in Helicobacter pylori (strain ATCC 700392 / 26695) (Campylobacter pylori).